The chain runs to 141 residues: Hemoglobin subunit alpha-D (141 aa).

Residues 1–141 form the Globin domain; it reads MLTADDKKIL…VAAVLAEKYR (141 aa). His58 and His87 together coordinate heme b.

Belongs to the globin family. Heterotetramer of two alpha-D chains and two beta chains. As to expression, red blood cells.

Functionally, involved in oxygen transport from the lung to the various peripheral tissues. This Branta canadensis (Canada goose) protein is Hemoglobin subunit alpha-D (HBAD).